A 209-amino-acid chain; its full sequence is Uracil phosphoribosyltransferase (209 aa).

Residues Arg-78, Arg-103, and 130 to 138 (DPMLATAGS) each bind 5-phospho-alpha-D-ribose 1-diphosphate. Uracil contacts are provided by residues Ile-193 and 198–200 (GDA). Asp-199 contacts 5-phospho-alpha-D-ribose 1-diphosphate.

The protein belongs to the UPRTase family. Requires Mg(2+) as cofactor.

The enzyme catalyses UMP + diphosphate = 5-phospho-alpha-D-ribose 1-diphosphate + uracil. Its pathway is pyrimidine metabolism; UMP biosynthesis via salvage pathway; UMP from uracil: step 1/1. Allosterically activated by GTP. Functionally, catalyzes the conversion of uracil and 5-phospho-alpha-D-ribose 1-diphosphate (PRPP) to UMP and diphosphate. The polypeptide is Uracil phosphoribosyltransferase (Methylibium petroleiphilum (strain ATCC BAA-1232 / LMG 22953 / PM1)).